The primary structure comprises 230 residues: Demethylmenaquinone methyltransferase (230 aa).

Residues Thr-62, Asp-80, Asp-100–Ala-101, and Ser-117 contribute to the S-adenosyl-L-methionine site.

Belongs to the class I-like SAM-binding methyltransferase superfamily. MenG/UbiE family.

The catalysed reaction is a 2-demethylmenaquinol + S-adenosyl-L-methionine = a menaquinol + S-adenosyl-L-homocysteine + H(+). It participates in quinol/quinone metabolism; menaquinone biosynthesis; menaquinol from 1,4-dihydroxy-2-naphthoate: step 2/2. Functionally, methyltransferase required for the conversion of demethylmenaquinol (DMKH2) to menaquinol (MKH2). This chain is Demethylmenaquinone methyltransferase, found in Mycobacterium sp. (strain JLS).